We begin with the raw amino-acid sequence, 265 residues long: Indole-3-glycerol phosphate synthase (265 aa).

It belongs to the TrpC family.

The catalysed reaction is 1-(2-carboxyphenylamino)-1-deoxy-D-ribulose 5-phosphate + H(+) = (1S,2R)-1-C-(indol-3-yl)glycerol 3-phosphate + CO2 + H2O. It participates in amino-acid biosynthesis; L-tryptophan biosynthesis; L-tryptophan from chorismate: step 4/5. This Xanthomonas oryzae pv. oryzae (strain MAFF 311018) protein is Indole-3-glycerol phosphate synthase.